Reading from the N-terminus, the 353-residue chain is Phosphate acyltransferase (353 aa).

This sequence belongs to the PlsX family. Homodimer. Probably interacts with PlsY.

The protein resides in the cytoplasm. It carries out the reaction a fatty acyl-[ACP] + phosphate = an acyl phosphate + holo-[ACP]. It functions in the pathway lipid metabolism; phospholipid metabolism. Its function is as follows. Catalyzes the reversible formation of acyl-phosphate (acyl-PO(4)) from acyl-[acyl-carrier-protein] (acyl-ACP). This enzyme utilizes acyl-ACP as fatty acyl donor, but not acyl-CoA. This Agrobacterium fabrum (strain C58 / ATCC 33970) (Agrobacterium tumefaciens (strain C58)) protein is Phosphate acyltransferase.